Reading from the N-terminus, the 280-residue chain is MAFQGTSRTLTQQSSAATSDDLQKILFSPEAIKKMATECDLGRHHWMRADNAISVRPLVPEVTHGRIASFFKSGYDVGELCSKGYMSVPQVLCAVTRTVSTDAEGSLRIYLADLGDKELSPIDGQCVSLHNHDLPALVSFQPTYDCPMETVGNRKRCFAVVIERHGYIGYTGTTASVCSNWQARFSSKNNNYTHIAAGKTLVLPFNRLAEQTKPSAVARLLKSQLNNIESSQYLLTNAKINQNAHVSESEELNVESPPAAIGSSSASRSEAFRPQVVNGL.

The disordered stretch occupies residues 248-267; sequence ESEELNVESPPAAIGSSSAS. Low complexity predominate over residues 255–267; that stretch reads ESPPAAIGSSSAS.

It belongs to the cucumovirus movement protein family.

Its subcellular location is the host cell junction. The protein localises to the host plasmodesma. Its function is as follows. Transports viral genome to neighboring plant cells directly through plasmosdesmata, without any budding. The movement protein allows efficient cell to cell propagation, by bypassing the host cell wall barrier. Acts by forming a tubular structure at the host plasmodesmata, enlarging it enough to allow free passage of virion capsids. The polypeptide is Movement protein (Cucumis sativus (Cucumber)).